Here is a 133-residue protein sequence, read N- to C-terminus: Helix-loop-helix protein 1 (133 aa).

The interval 1–78 (MMLNSDTMEL…RRRATAKYRT (78 aa)) is disordered. The span at 25-39 (DCGGGPGPDGAGSGD) shows a compositional bias: gly residues. Residues 52–65 (ESGRKDLQHLSREE) are compositionally biased toward basic and acidic residues. Over residues 66–78 (RRRRRRATAKYRT) the composition is skewed to basic residues. A bHLH domain is found at 75–127 (KYRTAHATRERIRVEAFNLAFAELRKLLPTLPPDKKLSKIEILRLAICYISYL).

As to quaternary structure, efficient DNA binding requires dimerization with another bHLH protein.

Its subcellular location is the nucleus. Its function is as follows. May serve as DNA-binding protein and may be involved in the control of cell-type determination, possibly within the developing nervous system. The polypeptide is Helix-loop-helix protein 1 (Nhlh1) (Mus musculus (Mouse)).